Reading from the N-terminus, the 162-residue chain is NADH-quinone oxidoreductase subunit I (162 aa).

2 4Fe-4S ferredoxin-type domains span residues 52–82 (LRRY…IEAG) and 93–122 (TRYD…EGPN). [4Fe-4S] cluster is bound by residues cysteine 62, cysteine 65, cysteine 68, cysteine 72, cysteine 102, cysteine 105, cysteine 108, and cysteine 112.

Belongs to the complex I 23 kDa subunit family. NDH-1 is composed of 14 different subunits. Subunits NuoA, H, J, K, L, M, N constitute the membrane sector of the complex. [4Fe-4S] cluster is required as a cofactor.

It localises to the cell inner membrane. The enzyme catalyses a quinone + NADH + 5 H(+)(in) = a quinol + NAD(+) + 4 H(+)(out). Its function is as follows. NDH-1 shuttles electrons from NADH, via FMN and iron-sulfur (Fe-S) centers, to quinones in the respiratory chain. The immediate electron acceptor for the enzyme in this species is believed to be ubiquinone. Couples the redox reaction to proton translocation (for every two electrons transferred, four hydrogen ions are translocated across the cytoplasmic membrane), and thus conserves the redox energy in a proton gradient. The protein is NADH-quinone oxidoreductase subunit I of Methylobacterium radiotolerans (strain ATCC 27329 / DSM 1819 / JCM 2831 / NBRC 15690 / NCIMB 10815 / 0-1).